A 270-amino-acid chain; its full sequence is uncharacterized protein (270 aa).

2 stretches are compositionally biased toward basic and acidic residues: residues M1–Y13 and E49–K73. 3 disordered regions span residues M1–E76, S90–E111, and K204–E270. Polar residues predominate over residues S90–T102. Over residues K204–K216 the composition is skewed to basic residues. The span at L218–K235 shows a compositional bias: basic and acidic residues. A compositionally biased stretch (basic residues) spans Q236 to V253.

This is an uncharacterized protein from Saccharomyces cerevisiae (strain ATCC 204508 / S288c) (Baker's yeast).